Consider the following 191-residue polypeptide: Protein GrpE (191 aa).

The segment covering 1 to 10 (MNHEEQKVET) has biased composition (basic and acidic residues). A disordered region spans residues 1–28 (MNHEEQKVETMEQVEAQPVEPTDVDSEV).

It belongs to the GrpE family. Homodimer.

The protein resides in the cytoplasm. Participates actively in the response to hyperosmotic and heat shock by preventing the aggregation of stress-denatured proteins, in association with DnaK and GrpE. It is the nucleotide exchange factor for DnaK and may function as a thermosensor. Unfolded proteins bind initially to DnaJ; upon interaction with the DnaJ-bound protein, DnaK hydrolyzes its bound ATP, resulting in the formation of a stable complex. GrpE releases ADP from DnaK; ATP binding to DnaK triggers the release of the substrate protein, thus completing the reaction cycle. Several rounds of ATP-dependent interactions between DnaJ, DnaK and GrpE are required for fully efficient folding. This is Protein GrpE from Aeromonas salmonicida (strain A449).